Here is a 433-residue protein sequence, read N- to C-terminus: Histidine--tRNA ligase (433 aa).

It belongs to the class-II aminoacyl-tRNA synthetase family. In terms of assembly, homodimer.

It is found in the cytoplasm. It catalyses the reaction tRNA(His) + L-histidine + ATP = L-histidyl-tRNA(His) + AMP + diphosphate + H(+). This is Histidine--tRNA ligase from Crocosphaera subtropica (strain ATCC 51142 / BH68) (Cyanothece sp. (strain ATCC 51142)).